A 73-amino-acid polypeptide reads, in one-letter code: Disintegrin lachesin (73 aa).

The Disintegrin domain occupies 1 to 73; that stretch reads EAGEECDCGA…ADCPRNGYYG (73 aa). Intrachain disulfides connect cysteine 6–cysteine 21, cysteine 8–cysteine 16, cysteine 15–cysteine 38, cysteine 29–cysteine 35, cysteine 34–cysteine 59, and cysteine 47–cysteine 66. The Cell attachment site signature appears at 51–53; that stretch reads RGD. The segment at 51 to 73 is disordered; sequence RGDNPDDRCTGQSADCPRNGYYG.

This sequence belongs to the venom metalloproteinase (M12B) family. P-II subfamily. P-IIa sub-subfamily. In terms of assembly, monomer (disintegrin). Expressed by the venom gland.

Its subcellular location is the secreted. Inhibits fibrinogen interaction with platelets. Acts by binding to alpha-IIb/beta-3 (ITGA2B/ITGB3) on the platelet surface and inhibits aggregation induced by ADP, thrombin, platelet-activating factor and collagen. This is Disintegrin lachesin from Lachesis muta muta (Bushmaster).